A 239-amino-acid polypeptide reads, in one-letter code: Fatty acid metabolism regulator protein (239 aa).

An HTH gntR-type domain is found at Gln6–Phe74. A DNA-binding region (H-T-H motif) is located at residues Glu34–Gln53.

As to quaternary structure, homodimer.

The protein resides in the cytoplasm. Its function is as follows. Multifunctional regulator of fatty acid metabolism. The polypeptide is Fatty acid metabolism regulator protein (Proteus mirabilis (strain HI4320)).